The sequence spans 404 residues: Inosine-5'-monophosphate dehydrogenase (404 aa).

Residues Asp-172 and 222-224 (GIG) each bind NAD(+). Residues Gly-224 and Gly-226 each contribute to the K(+) site. Ser-227 provides a ligand contact to IMP. Cys-229 is a K(+) binding site. Cys-229 (thioimidate intermediate) is an active-site residue. IMP contacts are provided by residues 262–264 (DGG), 285–286 (GN), and 309–313 (YVGMG). Arg-325 (proton acceptor) is an active-site residue. Glu-340 lines the IMP pocket. K(+) contacts are provided by Glu-394, Ser-395, and His-396.

This sequence belongs to the IMPDH/GMPR family. As to quaternary structure, homotetramer. K(+) serves as cofactor.

The catalysed reaction is IMP + NAD(+) + H2O = XMP + NADH + H(+). Its pathway is purine metabolism; XMP biosynthesis via de novo pathway; XMP from IMP: step 1/1. Mycophenolic acid (MPA) is a non-competitive inhibitor that prevents formation of the closed enzyme conformation by binding to the same site as the amobile flap. In contrast, mizoribine monophosphate (MZP) is a competitive inhibitor that induces the closed conformation. MPA is a potent inhibitor of mammalian IMPDHs but a poor inhibitor of the bacterial enzymes. MZP is a more potent inhibitor of bacterial IMPDH. Its function is as follows. Catalyzes the conversion of inosine 5'-phosphate (IMP) to xanthosine 5'-phosphate (XMP), the first committed and rate-limiting step in the de novo synthesis of guanine nucleotides, and therefore plays an important role in the regulation of cell growth. Essential for mouse infection by tick bite and critical for the survival in environments that appear to lack sufficient amounts of guanine, guanosine, and/or deoxyguanosine to support spirochete growth, such as mammalian host tissues. This is Inosine-5'-monophosphate dehydrogenase from Borreliella burgdorferi (strain ATCC 35210 / DSM 4680 / CIP 102532 / B31) (Borrelia burgdorferi).